The primary structure comprises 499 residues: Cytochrome P450 monooxygenase ausI (499 aa).

The chain crosses the membrane as a helical span at residues 10-30 (PLGQPLIAGFVVVSAVLYLLY). Cysteine 439 is a binding site for heme. An N-linked (GlcNAc...) asparagine glycan is attached at asparagine 483.

This sequence belongs to the cytochrome P450 family. It depends on heme as a cofactor.

Its subcellular location is the membrane. It participates in secondary metabolite biosynthesis; terpenoid biosynthesis. Functionally, cytochrome P450 monooxygenase; part of the gene cluster B that mediates the biosynthesis of austinol and dehydroaustinol, two fungal meroterpenoids. The first step of the pathway is the synthesis of 3,5-dimethylorsellinic acid by the polyketide synthase ausA. 3,5-dimethylorsellinic acid is then prenylated by the polyprenyl transferase ausN. Further epoxidation by the FAD-dependent monooxygenase ausM and cyclization by the probable terpene cyclase ausL lead to the formation of protoaustinoid A. Protoaustinoid A is then oxidized to spiro-lactone preaustinoid A3 by the combined action of the FAD-binding monooxygenases ausB and ausC, and the dioxygenase ausE. Acid-catalyzed keto-rearrangement and ring contraction of the tetraketide portion of preaustinoid A3 by ausJ lead to the formation of preaustinoid A4. The aldo-keto reductase ausK, with the help of ausH, is involved in the next step by transforming preaustinoid A4 into isoaustinone which is in turn hydroxylated by the P450 monooxygenase ausI to form austinolide. Finally, the cytochrome P450 monooxygenase ausG modifies austinolide to austinol. Austinol can be further modified to dehydroaustinol which forms a diffusible complex with diorcinol that initiates conidiation. Due to genetic rearrangements of the clusters and the subsequent loss of some enzymes, the end products of the Emericella nidulans austinoid biosynthesis clusters are austinol and dehydroaustinol, even if additional enzymes, such as the O-acetyltransferase ausQ and the cytochrome P450 monooxygenase ausR are still functional. This is Cytochrome P450 monooxygenase ausI from Emericella nidulans (strain FGSC A4 / ATCC 38163 / CBS 112.46 / NRRL 194 / M139) (Aspergillus nidulans).